A 219-amino-acid polypeptide reads, in one-letter code: Peroxiredoxin-5, mitochondrial (219 aa).

The N-terminal 57 residues, 1-57, are a transit peptide targeting the mitochondrion; the sequence is MRLGWLRVLGCRPGSVVSRATIVEGASTTAAGTRGCLEGILEWTFGGVRGFRSAAVA. Residues 61-219 form the Thioredoxin domain; that stretch reads IKVGDAIPSV…SLAPNILSQL (159 aa). K80 is modified (N6-acetyllysine). K88 carries the N6-acetyllysine; alternate modification. N6-succinyllysine; alternate is present on K88. The active-site Cysteine sulfenic acid (-SOH) intermediate is C105. C105 carries the S-palmitoyl cysteine lipid modification. An intrachain disulfide couples C105 to C209. Position 121 is an N6-succinyllysine (K121). S187 is modified (phosphoserine). Positions 217–219 match the Microbody targeting signal motif; that stretch reads SQL.

It belongs to the peroxiredoxin family. Prx5 subfamily. As to quaternary structure, monomer. S-palmitoylated. Palmitoylation occurs on the active site, inhibiting its reactivity; therefore PRDX5 palmitoylation status determines its antioxidant capacity. In terms of processing, S-palmitoylated. Depalmitoylated by ABHD10.

The protein localises to the mitochondrion. It is found in the cytoplasm. Its subcellular location is the peroxisome matrix. The enzyme catalyses a hydroperoxide + [thioredoxin]-dithiol = an alcohol + [thioredoxin]-disulfide + H2O. Its function is as follows. Thiol-specific peroxidase that catalyzes the reduction of hydrogen peroxide and organic hydroperoxides to water and alcohols, respectively. Plays a role in cell protection against oxidative stress by detoxifying peroxides and as sensor of hydrogen peroxide-mediated signaling events. This is Peroxiredoxin-5, mitochondrial (PRDX5) from Bos taurus (Bovine).